The sequence spans 348 residues: Phosphoribosylformylglycinamidine cyclo-ligase (348 aa).

It belongs to the AIR synthase family.

It localises to the cytoplasm. The enzyme catalyses 2-formamido-N(1)-(5-O-phospho-beta-D-ribosyl)acetamidine + ATP = 5-amino-1-(5-phospho-beta-D-ribosyl)imidazole + ADP + phosphate + H(+). It functions in the pathway purine metabolism; IMP biosynthesis via de novo pathway; 5-amino-1-(5-phospho-D-ribosyl)imidazole from N(2)-formyl-N(1)-(5-phospho-D-ribosyl)glycinamide: step 2/2. This chain is Phosphoribosylformylglycinamidine cyclo-ligase, found in Geobacter metallireducens (strain ATCC 53774 / DSM 7210 / GS-15).